The sequence spans 338 residues: Dehydrogenase/reductase SDR family member 7 (338 aa).

Residues 1-28 (MSWELLLWLLALCALILPLVQLLRFLRA) form the signal peptide. NAD(+)-binding residues include Ser60 and Ile62. Substrate is bound at residue Ser190. NAD(+) is bound by residues Tyr203, Lys207, and Ser239. Tyr203 acts as the Proton acceptor in catalysis.

Belongs to the short-chain dehydrogenases/reductases (SDR) family.

It localises to the endoplasmic reticulum membrane. The catalysed reaction is all-trans-retinol + NADP(+) = all-trans-retinal + NADPH + H(+). The enzyme catalyses 5alpha-androstane-3alpha,17beta-diol + NADP(+) = 17beta-hydroxy-5alpha-androstan-3-one + NADPH + H(+). In terms of biological role, NADPH-dependent oxidoreductase which catalyzes the reduction of a variety of compounds bearing carbonyl groups including steroids, retinoids and xenobiotics. Catalyzes the reduction/inactivation of 5alpha-dihydrotestosterone to 3alpha-androstanediol, with a possible role in the modulation of androgen receptor function. Involved in the reduction of all-trans-retinal to all-trans-retinol. Converts cortisone to 20beta-dihydrocortisone in vitro, although the physiological relevance of this activity is questionable. Reduces exogenous compounds such as quinones (1,2-naphtoquinone, 9,10-phenantrenequinone and benzoquinone) and other xenobiotics (alpha-diketones) in vitro, suggesting a role in the biotransformation of xenobiotics with carbonyl group. A dehydrogenase activity has not been detected so far. May play a role as tumor suppressor. The protein is Dehydrogenase/reductase SDR family member 7 of Mus musculus (Mouse).